A 224-amino-acid chain; its full sequence is MSEDNFDEEFDGTLPSGPRHPMARRFRGYLPVVVDVETGGFNSATDALLEIAATTVGMDEKGFLFPEHTYFFRIEPFEGANIEPAALEFTGIKLDHPLRMAVQEEQALTEIFRGIRKALKANGCKRAILVGHNSSFDLGFLNAAVARTGIKRNPFHPFSSFDTATLAGLAYGQTVLAKACQAAGMEFDNREAHSARYDTEKTAELFCGIVNRWKEMGGWMDDDD.

The Exonuclease domain occupies 32–206 (VVVDVETGGF…YDTEKTAELF (175 aa)). Mg(2+) is bound by residues Asp-35, Glu-37, His-193, and Asp-198. His-193 acts as the Proton donor/acceptor in catalysis.

This sequence belongs to the RNase T family. Homodimer. Mg(2+) serves as cofactor.

Trims short 3' overhangs of a variety of RNA species, leaving a one or two nucleotide 3' overhang. Responsible for the end-turnover of tRNA: specifically removes the terminal AMP residue from uncharged tRNA (tRNA-C-C-A). Also appears to be involved in tRNA biosynthesis. This chain is Ribonuclease T, found in Pseudomonas paraeruginosa (strain DSM 24068 / PA7) (Pseudomonas aeruginosa (strain PA7)).